Reading from the N-terminus, the 77-residue chain is NAD(P)H-quinone oxidoreductase subunit L (77 aa).

A run of 2 helical transmembrane segments spans residues 12 to 32 and 47 to 67; these read LVAYVGIVSIYLLVIPLILFY and LIVYGLVFLFFPGLILFSPFL.

Belongs to the complex I NdhL subunit family. NDH-1 can be composed of about 15 different subunits; different subcomplexes with different compositions have been identified which probably have different functions.

It is found in the cellular thylakoid membrane. The enzyme catalyses a plastoquinone + NADH + (n+1) H(+)(in) = a plastoquinol + NAD(+) + n H(+)(out). The catalysed reaction is a plastoquinone + NADPH + (n+1) H(+)(in) = a plastoquinol + NADP(+) + n H(+)(out). In terms of biological role, NDH-1 shuttles electrons from an unknown electron donor, via FMN and iron-sulfur (Fe-S) centers, to quinones in the respiratory and/or the photosynthetic chain. The immediate electron acceptor for the enzyme in this species is believed to be plastoquinone. Couples the redox reaction to proton translocation, and thus conserves the redox energy in a proton gradient. Cyanobacterial NDH-1 also plays a role in inorganic carbon-concentration. The chain is NAD(P)H-quinone oxidoreductase subunit L from Prochlorococcus marinus subsp. pastoris (strain CCMP1986 / NIES-2087 / MED4).